The following is a 352-amino-acid chain: Ion-translocating oxidoreductase complex subunit D (352 aa).

The next 4 helical transmembrane spans lie at 20–40, 42–62, 69–91, and 123–143; these read IMLL…WFFG, GTLF…AIVL, VASH…SIPP, and PAMI…TSWL. Residue Thr187 is modified to FMN phosphoryl threonine. The next 5 membrane-spanning stretches (helical) occupy residues 215-235, 242-262, 267-287, 301-321, and 322-342; these read LAGV…VFLL, WHIP…GWLF, LASP…FFIL, LIFG…GGYP, and DGVA…DYYT.

It belongs to the NqrB/RnfD family. The complex is composed of six subunits: RsxA, RsxB, RsxC, RsxD, RsxE and RsxG. FMN serves as cofactor.

Its subcellular location is the cell inner membrane. In terms of biological role, part of a membrane-bound complex that couples electron transfer with translocation of ions across the membrane. Required to maintain the reduced state of SoxR. This Salmonella choleraesuis (strain SC-B67) protein is Ion-translocating oxidoreductase complex subunit D.